The sequence spans 435 residues: 5-methylthioadenosine/S-adenosylhomocysteine deaminase (435 aa).

Zn(2+)-binding residues include His-65 and His-67. 3 residues coordinate substrate: Glu-94, Arg-150, and His-189. His-216 is a Zn(2+) binding site. Residues Glu-219 and Asp-304 each coordinate substrate. Position 304 (Asp-304) interacts with Zn(2+).

Belongs to the metallo-dependent hydrolases superfamily. MTA/SAH deaminase family. Zn(2+) serves as cofactor.

The catalysed reaction is S-adenosyl-L-homocysteine + H2O + H(+) = S-inosyl-L-homocysteine + NH4(+). The enzyme catalyses S-methyl-5'-thioadenosine + H2O + H(+) = S-methyl-5'-thioinosine + NH4(+). In terms of biological role, catalyzes the deamination of 5-methylthioadenosine and S-adenosyl-L-homocysteine into 5-methylthioinosine and S-inosyl-L-homocysteine, respectively. Is also able to deaminate adenosine. This chain is 5-methylthioadenosine/S-adenosylhomocysteine deaminase, found in Bacillus cereus (strain ATCC 10987 / NRS 248).